Consider the following 56-residue polypeptide: Venom peptide 5 (56 aa).

Residues 1–26 form the signal peptide; it reads MKTASFILSFVVLLIVIITWIGEVSA. Residues 27-42 constitute a propeptide that is removed on maturation; that stretch reads VSEPEPVAKATAHAAA. An intrachain disulfide couples Cys-49 to Cys-54.

Probably contains 1 disulfide bond, which may be crucial for activity, since the linear peptide without disulfide bond is inactive. In terms of tissue distribution, expressed by the venom gland.

It is found in the secreted. The protein is Venom peptide 5 of Eumenes pomiformis (Potter wasp).